Reading from the N-terminus, the 301-residue chain is 4-hydroxy-tetrahydrodipicolinate synthase (301 aa).

Position 46 (Thr-46) interacts with pyruvate. Tyr-134 serves as the catalytic Proton donor/acceptor. Lys-162 functions as the Schiff-base intermediate with substrate in the catalytic mechanism. Ile-203 contributes to the pyruvate binding site.

Belongs to the DapA family. Homotetramer; dimer of dimers.

Its subcellular location is the cytoplasm. The catalysed reaction is L-aspartate 4-semialdehyde + pyruvate = (2S,4S)-4-hydroxy-2,3,4,5-tetrahydrodipicolinate + H2O + H(+). Its pathway is amino-acid biosynthesis; L-lysine biosynthesis via DAP pathway; (S)-tetrahydrodipicolinate from L-aspartate: step 3/4. Its function is as follows. Catalyzes the condensation of (S)-aspartate-beta-semialdehyde [(S)-ASA] and pyruvate to 4-hydroxy-tetrahydrodipicolinate (HTPA). The protein is 4-hydroxy-tetrahydrodipicolinate synthase of Anaplasma marginale (strain Florida).